Reading from the N-terminus, the 406-residue chain is Bifunctional enzyme IspD/IspF (406 aa).

Residues 1–247 (MSLIRVNGEA…ALFFNPAKDT (247 aa)) form a 2-C-methyl-D-erythritol 4-phosphate cytidylyltransferase region. The tract at residues 248 to 406 (FIGMGFDTHA…HVSMRYKQKL (159 aa)) is 2-C-methyl-D-erythritol 2,4-cyclodiphosphate synthase. The a divalent metal cation site is built by Asp-254 and His-256. 4-CDP-2-C-methyl-D-erythritol 2-phosphate contacts are provided by residues 254-256 (DTH) and 280-281 (HS). Residue His-288 coordinates a divalent metal cation. 4-CDP-2-C-methyl-D-erythritol 2-phosphate is bound by residues 302-304 (DIG), 307-311 (FPDND), 378-381 (TTME), Phe-385, and Lys-388.

The protein in the N-terminal section; belongs to the IspD/TarI cytidylyltransferase family. IspD subfamily. This sequence in the C-terminal section; belongs to the IspF family. The cofactor is a divalent metal cation.

The catalysed reaction is 2-C-methyl-D-erythritol 4-phosphate + CTP + H(+) = 4-CDP-2-C-methyl-D-erythritol + diphosphate. It catalyses the reaction 4-CDP-2-C-methyl-D-erythritol 2-phosphate = 2-C-methyl-D-erythritol 2,4-cyclic diphosphate + CMP. It participates in isoprenoid biosynthesis; isopentenyl diphosphate biosynthesis via DXP pathway; isopentenyl diphosphate from 1-deoxy-D-xylulose 5-phosphate: step 2/6. It functions in the pathway isoprenoid biosynthesis; isopentenyl diphosphate biosynthesis via DXP pathway; isopentenyl diphosphate from 1-deoxy-D-xylulose 5-phosphate: step 4/6. Bifunctional enzyme that catalyzes the formation of 4-diphosphocytidyl-2-C-methyl-D-erythritol from CTP and 2-C-methyl-D-erythritol 4-phosphate (MEP) (IspD), and catalyzes the conversion of 4-diphosphocytidyl-2-C-methyl-D-erythritol 2-phosphate (CDP-ME2P) to 2-C-methyl-D-erythritol 2,4-cyclodiphosphate (ME-CPP) with a corresponding release of cytidine 5-monophosphate (CMP) (IspF). This is Bifunctional enzyme IspD/IspF from Helicobacter pylori (strain P12).